We begin with the raw amino-acid sequence, 127 residues long: CDGSH iron-sulfur domain-containing protein 3, mitochondrial (127 aa).

The transit peptide at 1 to 14 directs the protein to the mitochondrion; that stretch reads MRGAGAILRPAARG. An N6-acetyllysine; alternate modification is found at Lys-55. Lys-55 is modified (N6-succinyllysine; alternate). 4 residues coordinate [2Fe-2S] cluster: Cys-60, Cys-62, Cys-71, and His-75. Lys-86 carries the post-translational modification N6-acetyllysine. [2Fe-2S] cluster contacts are provided by Cys-98, Cys-100, Cys-109, and His-113.

The protein belongs to the CISD protein family. Monomer. [2Fe-2S] cluster serves as cofactor.

It is found in the mitochondrion. Functionally, can transfer its iron-sulfur clusters to the apoferrodoxins FDX1 and FDX2. Contributes to mitochondrial iron homeostasis and in maintaining normal levels of free iron and reactive oxygen species, and thereby contributes to normal mitochondrial function. The chain is CDGSH iron-sulfur domain-containing protein 3, mitochondrial (CISD3) from Homo sapiens (Human).